Consider the following 97-residue polypeptide: Citrate lyase acyl carrier protein (97 aa).

Serine 14 is subject to O-(phosphoribosyl dephospho-coenzyme A)serine.

Belongs to the CitD family. Oligomer with a subunit composition of (alpha,beta,gamma)6.

The protein resides in the cytoplasm. Covalent carrier of the coenzyme of citrate lyase. This is Citrate lyase acyl carrier protein from Klebsiella pneumoniae subsp. pneumoniae (strain ATCC 700721 / MGH 78578).